The sequence spans 292 residues: Mycothiol acetyltransferase (292 aa).

2 N-acetyltransferase domains span residues 13 to 168 and 159 to 292; these read ALDR…KWLQ and KSVA…VYEK. Residue Glu-40 coordinates 1D-myo-inositol 2-(L-cysteinylamino)-2-deoxy-alpha-D-glucopyranoside. Residue 77 to 79 coordinates acetyl-CoA; the sequence is LAV. Residues Glu-179, Lys-218, and Glu-226 each coordinate 1D-myo-inositol 2-(L-cysteinylamino)-2-deoxy-alpha-D-glucopyranoside. Acetyl-CoA contacts are provided by residues 230–232 and 237–243; these read VGL and RGRGLGD. Tyr-264 provides a ligand contact to 1D-myo-inositol 2-(L-cysteinylamino)-2-deoxy-alpha-D-glucopyranoside.

It belongs to the acetyltransferase family. MshD subfamily. As to quaternary structure, monomer.

The enzyme catalyses 1D-myo-inositol 2-(L-cysteinylamino)-2-deoxy-alpha-D-glucopyranoside + acetyl-CoA = mycothiol + CoA + H(+). Catalyzes the transfer of acetyl from acetyl-CoA to desacetylmycothiol (Cys-GlcN-Ins) to form mycothiol. This chain is Mycothiol acetyltransferase, found in Corynebacterium glutamicum (strain R).